The following is a 157-amino-acid chain: Eukaryotic translation initiation factor 5A-1 (157 aa).

S2 bears the N-acetylserine mark. S2 carries the post-translational modification Phosphoserine. Phosphothreonine occurs at positions 7 and 10. K51 is modified (hypusine). S74 carries the phosphoserine modification. K86 is covalently cross-linked (Glycyl lysine isopeptide (Lys-Gly) (interchain with G-Cter in ubiquitin)).

The protein belongs to the eIF-5A family. As to quaternary structure, homodimer. Binds to 80S ribosomes. Actively translating ribosomes show mutually exclusive binding of eIF5a (HYP2 or ANB1) and EFT1/eEF2. Interacts with DYS1 and LIA1. Lys-51 undergoes hypusination, a unique post-translational modification that consists in the addition of a butylamino group from spermidine to lysine side chain, leading to the formation of the unusual amino acid hypusine. eIF-5As are the only known proteins to undergo this modification, which is essential for their function.

The protein localises to the cytoplasm. In terms of biological role, translation factor that promotes translation elongation and termination, particularly upon ribosome stalling at specific amino acid sequence contexts. Binds between the exit (E) and peptidyl (P) site of the ribosome and promotes rescue of stalled ribosome: specifically required for efficient translation of polyproline-containing peptides as well as other motifs that stall the ribosome. Acts as a ribosome quality control (RQC) cofactor by joining the RQC complex to facilitate peptidyl transfer during CAT tailing step. Involved in actin dynamics and cell cycle progression, mRNA decay and probably in a pathway involved in stress response and maintenance of cell wall integrity. The chain is Eukaryotic translation initiation factor 5A-1 (HYP2) from Saccharomyces cerevisiae (strain ATCC 204508 / S288c) (Baker's yeast).